The sequence spans 147 residues: Cyclic di-AMP receptor B (147 aa).

In terms of domain architecture, CBS spans 18–78 (MIEADKVAHV…SIFGLERIEF (61 aa)). Lys23, Ala25, Thr46, Ala47, and Arg131 together coordinate 3',3'-c-di-AMP.

In terms of assembly, homodimer. Forms a homodimer with a parallel, head-to-head assembly of the monomers. Under conditions of potassium starvation and corresponding low c-di-AMP levels, apo-DarB specifically interacts with the N-terminal region of the RelA. Under the same conditions, apo-DarB also specifically interacts with the C-terminal part of the pyruvate carboxylase.

With respect to regulation, binds c-di-AMP. Binding of c-di-AMP to DarB inhibits the interaction with RelA and PYC. Functionally, involved in the c-di-AMP-dependent regulation of the bacterial stringent response. Modulates the activities of at least two enzymes under conditions of potassium limitation. Apo-DarB regulates the activity of the GTP pyrophosphokinase RelA by interacting directly with RelA, leading to stimulation of (p)ppGpp synthesis and induction of the stringent response. Apo-DarB also regulates pyruvate carboxylase (PYC) at two levels: directly at the protein level by binding to the enzyme and stimulating the synthesis of oxaloacetate and indirectly, by interaction with RelA, which leads to activation of the stringent response and to the increased expression of the pycA gene. Stimulation of these enzymes by DarB is prevented in the presence of cyclic di-AMP (c-di-AMP). The protein is Cyclic di-AMP receptor B of Bacillus subtilis (strain 168).